Reading from the N-terminus, the 508-residue chain is Citrate lyase alpha chain (508 aa).

Oligomer with a subunit composition of (alpha,beta,gamma)6.

It localises to the cytoplasm. The catalysed reaction is citrate = oxaloacetate + acetate. It catalyses the reaction citrate + acetyl-CoA = (3S)-citryl-CoA + acetate. Represents a citrate:acetyl-ACP transferase. The polypeptide is Citrate lyase alpha chain (citF) (Klebsiella pneumoniae).